The following is a 353-amino-acid chain: Fasciculation and elongation protein zeta-2 (353 aa).

The interval 19–49 (SLLDQENCNASPEPGAEAGAEAGGGADGFPA) is disordered. Residues 28 to 38 (ASPEPGAEAGA) show a composition bias toward low complexity. Phosphoserine occurs at positions 135, 176, and 195. Positions 214 to 286 (KRLSVSELNE…AKKKKKLKNG (73 aa)) form a coiled coil. Positions 271–300 (KEHKETAKKKKKLKNGSSQNGKNERSHMPG) are disordered.

Belongs to the zygin family. As to quaternary structure, homodimer; disulfide-linked. May form heterodimers with FEZ1. Interacts with synaptotagmin. Expressed in nonneural tissues, such as heart, lung, spleen, muscle, testis, placenta and melanocytes.

Its function is as follows. Involved in axonal outgrowth and fasciculation. The sequence is that of Fasciculation and elongation protein zeta-2 (FEZ2) from Homo sapiens (Human).